Reading from the N-terminus, the 301-residue chain is Glycine--tRNA ligase alpha subunit (301 aa).

The protein belongs to the class-II aminoacyl-tRNA synthetase family. As to quaternary structure, tetramer of two alpha and two beta subunits.

It localises to the cytoplasm. It carries out the reaction tRNA(Gly) + glycine + ATP = glycyl-tRNA(Gly) + AMP + diphosphate. The chain is Glycine--tRNA ligase alpha subunit from Actinobacillus pleuropneumoniae serotype 5b (strain L20).